The chain runs to 340 residues: GTP 3',8-cyclase (340 aa).

Residues 8–227 form the Radical SAM core domain; it reads KLGRPIRDLR…TMIEQHFEID (220 aa). R17 serves as a coordination point for GTP. C24 and C28 together coordinate [4Fe-4S] cluster. S-adenosyl-L-methionine is bound at residue Y30. Residue C31 coordinates [4Fe-4S] cluster. A GTP-binding site is contributed by R71. G75 is a binding site for S-adenosyl-L-methionine. T102 contributes to the GTP binding site. S126 is an S-adenosyl-L-methionine binding site. Residue K163 coordinates GTP. An S-adenosyl-L-methionine-binding site is contributed by M197. C261 and C264 together coordinate [4Fe-4S] cluster. GTP is bound at residue 266-268; sequence RAR. Position 278 (C278) interacts with [4Fe-4S] cluster.

It belongs to the radical SAM superfamily. MoaA family. In terms of assembly, monomer and homodimer. [4Fe-4S] cluster is required as a cofactor.

The enzyme catalyses GTP + AH2 + S-adenosyl-L-methionine = (8S)-3',8-cyclo-7,8-dihydroguanosine 5'-triphosphate + 5'-deoxyadenosine + L-methionine + A + H(+). It participates in cofactor biosynthesis; molybdopterin biosynthesis. Catalyzes the cyclization of GTP to (8S)-3',8-cyclo-7,8-dihydroguanosine 5'-triphosphate. In Staphylococcus aureus (strain USA300), this protein is GTP 3',8-cyclase.